We begin with the raw amino-acid sequence, 825 residues long: Thioredoxin domain-containing protein 16 (825 aa).

The signal sequence occupies residues 1–27 (MFSGFNVFRVGISFVIMCIFYMPTVNS). In terms of domain architecture, Thioredoxin spans 392–495 (LTVELTEETF…EDLLKFIQLN (104 aa)). An intrachain disulfide couples cysteine 449 to cysteine 456. An N-linked (GlcNAc...) asparagine glycan is attached at asparagine 460. Positions 762–787 (RKVPKCMKETDVQENDKEQHEDKSAV) are disordered. Residues 767 to 787 (CMKETDVQENDKEQHEDKSAV) are compositionally biased toward basic and acidic residues. The Mediates endoplasmic reticulum retention motif lies at 816-819 (DKEL).

In terms of assembly, interacts with FOXRED2. In terms of processing, glycosylated.

The protein resides in the secreted. It localises to the endoplasmic reticulum lumen. This Homo sapiens (Human) protein is Thioredoxin domain-containing protein 16.